The chain runs to 264 residues: Thymidylate synthase (264 aa).

R21 is a dUMP binding site. H51 serves as a coordination point for (6R)-5,10-methylene-5,6,7,8-tetrahydrofolate. R126–R127 lines the dUMP pocket. C146 (nucleophile) is an active-site residue. DUMP contacts are provided by residues R166–D169, N177, and H207–Y209. Residue D169 coordinates (6R)-5,10-methylene-5,6,7,8-tetrahydrofolate. Position 263 (A263) interacts with (6R)-5,10-methylene-5,6,7,8-tetrahydrofolate.

Belongs to the thymidylate synthase family. Bacterial-type ThyA subfamily. As to quaternary structure, homodimer.

It is found in the cytoplasm. The catalysed reaction is dUMP + (6R)-5,10-methylene-5,6,7,8-tetrahydrofolate = 7,8-dihydrofolate + dTMP. It functions in the pathway pyrimidine metabolism; dTTP biosynthesis. Its function is as follows. Catalyzes the reductive methylation of 2'-deoxyuridine-5'-monophosphate (dUMP) to 2'-deoxythymidine-5'-monophosphate (dTMP) while utilizing 5,10-methylenetetrahydrofolate (mTHF) as the methyl donor and reductant in the reaction, yielding dihydrofolate (DHF) as a by-product. This enzymatic reaction provides an intracellular de novo source of dTMP, an essential precursor for DNA biosynthesis. The protein is Thymidylate synthase of Xanthomonas oryzae pv. oryzae (strain MAFF 311018).